Here is a 326-residue protein sequence, read N- to C-terminus: HTH-type transcriptional regulator SyrM (326 aa).

One can recognise an HTH lysR-type domain in the interval 32–89 (IDLNLLVDLEALLQYRHITQAAQHVGRSQPAMSRALSRLRGMLKDDLLVAGSRGLVLT). Positions 49 to 68 (ITQAAQHVGRSQPAMSRALS) form a DNA-binding region, H-T-H motif.

The protein belongs to the LysR transcriptional regulatory family.

Functionally, acts in trans to stimulate nod gene expression via nodD3 and exo gene expression via SyrA. The chain is HTH-type transcriptional regulator SyrM (syrM) from Rhizobium meliloti (strain 1021) (Ensifer meliloti).